Consider the following 121-residue polypeptide: Protein yippee (121 aa).

In terms of domain architecture, Yippee spans K13–E110. Residues C17, C20, C73, and C76 each contribute to the Zn(2+) site.

This sequence belongs to the yippee family. In terms of assembly, interacts with hemolin.

The protein is Protein yippee of Drosophila melanogaster (Fruit fly).